The primary structure comprises 491 residues: Xaa-Pro aminopeptidase 1 (491 aa).

The tract at residues 1–32 (MAEELTPENPAIPETPEETEEPIKQRKNGLYP) is disordered. 5 residues coordinate Mn(2+): Asp308, Asp320, His403, Glu434, and Glu458.

It belongs to the peptidase M24B family. In terms of assembly, homodimer. It depends on Mn(2+) as a cofactor.

It carries out the reaction Release of any N-terminal amino acid, including proline, that is linked to proline, even from a dipeptide or tripeptide.. The protein is Xaa-Pro aminopeptidase 1 (pepPI) of Streptomyces coelicolor (strain ATCC BAA-471 / A3(2) / M145).